The sequence spans 120 residues: Phosphoribosyl-ATP pyrophosphatase (120 aa).

The interval 97–120 is disordered; it reads REGTSGLVEKASRPAKKDSGTADS. Basic and acidic residues predominate over residues 106–120; sequence KASRPAKKDSGTADS.

Belongs to the PRA-PH family.

The protein resides in the cytoplasm. It catalyses the reaction 1-(5-phospho-beta-D-ribosyl)-ATP + H2O = 1-(5-phospho-beta-D-ribosyl)-5'-AMP + diphosphate + H(+). It functions in the pathway amino-acid biosynthesis; L-histidine biosynthesis; L-histidine from 5-phospho-alpha-D-ribose 1-diphosphate: step 2/9. This is Phosphoribosyl-ATP pyrophosphatase from Rhodopirellula baltica (strain DSM 10527 / NCIMB 13988 / SH1).